The chain runs to 293 residues: 4-hydroxybenzoate octaprenyltransferase (293 aa).

The next 8 helical transmembrane spans lie at 41–61 (FAAA…LGVI), 98–118 (TEAK…DLLL), 122–142 (TFLL…MKRF), 145–165 (LPQV…YGAV), 167–187 (ESLP…TVAY), 218–238 (IIAL…WISQ), 241–261 (WGYF…CWLT), and 272–292 (AFLN…VGIY).

This sequence belongs to the UbiA prenyltransferase family. It depends on Mg(2+) as a cofactor.

The protein resides in the cell inner membrane. The catalysed reaction is all-trans-octaprenyl diphosphate + 4-hydroxybenzoate = 4-hydroxy-3-(all-trans-octaprenyl)benzoate + diphosphate. The protein operates within cofactor biosynthesis; ubiquinone biosynthesis. Catalyzes the prenylation of para-hydroxybenzoate (PHB) with an all-trans polyprenyl group. Mediates the second step in the final reaction sequence of ubiquinone-8 (UQ-8) biosynthesis, which is the condensation of the polyisoprenoid side chain with PHB, generating the first membrane-bound Q intermediate 3-octaprenyl-4-hydroxybenzoate. This chain is 4-hydroxybenzoate octaprenyltransferase, found in Actinobacillus pleuropneumoniae serotype 5b (strain L20).